Consider the following 159-residue polypeptide: Putative pre-16S rRNA nuclease (159 aa).

This sequence belongs to the YqgF nuclease family.

The protein localises to the cytoplasm. Its function is as follows. Could be a nuclease involved in processing of the 5'-end of pre-16S rRNA. The polypeptide is Putative pre-16S rRNA nuclease (Thermobifida fusca (strain YX)).